The sequence spans 451 residues: Trigger factor (451 aa).

In terms of domain architecture, PPIase FKBP-type spans 165–250 (DDKLTIDFEG…LHQIQAREAL (86 aa)).

The protein belongs to the FKBP-type PPIase family. Tig subfamily.

Its subcellular location is the cytoplasm. The enzyme catalyses [protein]-peptidylproline (omega=180) = [protein]-peptidylproline (omega=0). Involved in protein export. Acts as a chaperone by maintaining the newly synthesized protein in an open conformation. Functions as a peptidyl-prolyl cis-trans isomerase. The sequence is that of Trigger factor from Helicobacter pylori (strain G27).